The primary structure comprises 419 residues: MNKKVTLHDQDIADLINKESHRQEEHIELIASENYVSEDVMKAAGSSLTNKYGEGYPGKRYYGGCEFVDEIEKIAQERACKLFNAKYANVQPYSGSVANAAIYMALLNPGDSVLGLSLDSGGHLTHGYRISFSGIFYKSYTYTVNQDGVLDYDEILKIAQEVKPKMIICGYSAYSQIVDFAKFREIADAVGAYLFADIAHISGLVIANLHPSPMGYADVVATTTHKTLRGTRGAIILTNNEEIAKKIDRAVFPGNQGGPLFHQIAAKAVSFYEALQPEFIEYQRQIILNCKVFCQTFINKGVRVISGMTKNHLFTIDVKTSYNLTGKQAEQILSKMNITVNKNTIPFDTESPMVSSGIRLGVAAMTSRDFKEDEFIILANLIDKALREPNNETLHQVIKKEIAKLSHSFPIKRNYLDKK.

(6S)-5,6,7,8-tetrahydrofolate is bound by residues leucine 118 and 122 to 124 (GHL). An N6-(pyridoxal phosphate)lysine modification is found at lysine 226. Glutamate 242 lines the (6S)-5,6,7,8-tetrahydrofolate pocket.

The protein belongs to the SHMT family. In terms of assembly, homodimer. It depends on pyridoxal 5'-phosphate as a cofactor.

The protein resides in the cytoplasm. The enzyme catalyses (6R)-5,10-methylene-5,6,7,8-tetrahydrofolate + glycine + H2O = (6S)-5,6,7,8-tetrahydrofolate + L-serine. It functions in the pathway one-carbon metabolism; tetrahydrofolate interconversion. It participates in amino-acid biosynthesis; glycine biosynthesis; glycine from L-serine: step 1/1. Functionally, catalyzes the reversible interconversion of serine and glycine with tetrahydrofolate (THF) serving as the one-carbon carrier. This reaction serves as the major source of one-carbon groups required for the biosynthesis of purines, thymidylate, methionine, and other important biomolecules. Also exhibits THF-independent aldolase activity toward beta-hydroxyamino acids, producing glycine and aldehydes, via a retro-aldol mechanism. This Metamycoplasma arthritidis (strain 158L3-1) (Mycoplasma arthritidis) protein is Serine hydroxymethyltransferase.